The following is a 241-amino-acid chain: Uridylate kinase (241 aa).

Residue lysine 15–glycine 18 participates in ATP binding. Residues glycine 23–glycine 28 are involved in allosteric activation by GTP. Glycine 57 serves as a coordination point for UMP. ATP contacts are provided by glycine 58 and arginine 62. UMP contacts are provided by residues aspartate 77 and threonine 138 to threonine 145. ATP is bound by residues threonine 165, phenylalanine 171, and aspartate 174.

Belongs to the UMP kinase family. In terms of assembly, homohexamer.

It is found in the cytoplasm. The catalysed reaction is UMP + ATP = UDP + ADP. The protein operates within pyrimidine metabolism; CTP biosynthesis via de novo pathway; UDP from UMP (UMPK route): step 1/1. Its activity is regulated as follows. Allosterically activated by GTP. Inhibited by UTP. Catalyzes the reversible phosphorylation of UMP to UDP. This Blochmanniella pennsylvanica (strain BPEN) protein is Uridylate kinase.